The chain runs to 365 residues: Keratin-associated protein 10-6 (365 aa).

29 repeat units span residues 41–45 (CCEPP), 46–50 (CCAPA), 67–71 (CCPVT), 89–93 (CCQQS), 99–103 (CCASS), 109–113 (CCVPV), 114–118 (CCKTV), 119–123 (CCKPV), 124–128 (CCVSV), 129–133 (CCGDS), 135–139 (CCQQS), 145–149 (CCTSS), 155–159 (CCVPV), 160–164 (CCKPV), 172–176 (CCQQS), 186–190 (CCQAV), 208–212 (CCQQS), 218–222 (CCTSS), 228–232 (CCVPV), 233–237 (CCVPV), 238–242 (CCVPT), 250–254 (CCQQS), 260–264 (CCTSS), 270–274 (CCVPV), 282–286 (CCQQS), 292–296 (CCTAS), 297–301 (CCRSS), 316–320 (CCVPV), and 334–338 (CCRTA). The tract at residues 41-338 (CCEPPCCAPA…SCQPSCCRTA (298 aa)) is 29 X 5 AA repeats of C-C-X(3).

Belongs to the KRTAP type 10 family. In terms of assembly, interacts with hair keratins. As to expression, restricted to a narrow region of the hair fiber cuticle, lying approximately 20 cell layers above the apex of the dermal papilla of the hair root; not detected in any other tissues.

Its function is as follows. In the hair cortex, hair keratin intermediate filaments are embedded in an interfilamentous matrix, consisting of hair keratin-associated proteins (KRTAP), which are essential for the formation of a rigid and resistant hair shaft through their extensive disulfide bond cross-linking with abundant cysteine residues of hair keratins. The matrix proteins include the high-sulfur and high-glycine-tyrosine keratins. This Homo sapiens (Human) protein is Keratin-associated protein 10-6 (KRTAP10-6).